Reading from the N-terminus, the 414-residue chain is 3-oxoacyl-[acyl-carrier-protein] synthase 2 (414 aa).

The 408-residue stretch at 4 to 411 (NIRVVITGMG…GHNAVLVFKK (408 aa)) folds into the Ketosynthase family 3 (KS3) domain. Residues C165, H304, and H341 each act as for beta-ketoacyl synthase activity in the active site.

It belongs to the thiolase-like superfamily. Beta-ketoacyl-ACP synthases family.

The enzyme catalyses a fatty acyl-[ACP] + malonyl-[ACP] + H(+) = a 3-oxoacyl-[ACP] + holo-[ACP] + CO2. The catalysed reaction is (9Z)-hexadecenoyl-[ACP] + malonyl-[ACP] + H(+) = 3-oxo-(11Z)-octadecenoyl-[ACP] + holo-[ACP] + CO2. Its pathway is lipid metabolism; fatty acid biosynthesis. Its function is as follows. Involved in the type II fatty acid elongation cycle. Catalyzes the elongation of a wide range of acyl-ACP by the addition of two carbons from malonyl-ACP to an acyl acceptor. Can efficiently catalyze the conversion of palmitoleoyl-ACP (cis-hexadec-9-enoyl-ACP) to cis-vaccenoyl-ACP (cis-octadec-11-enoyl-ACP), an essential step in the thermal regulation of fatty acid composition. In Staphylococcus aureus (strain MRSA252), this protein is 3-oxoacyl-[acyl-carrier-protein] synthase 2 (fabF).